Reading from the N-terminus, the 280-residue chain is Transcription factor ovo-like homolog lin-48 (280 aa).

4 consecutive C2H2-type zinc fingers follow at residues 133-155 (LTCH…IKCH), 161-183 (YLCT…TRTH), 189-212 (YKCE…RKVH), and 228-251 (FVCE…KVVH).

The protein localises to the nucleus. In terms of biological role, transcription factor. Involved in development of the hindgut, the male tail, and the excretory duct cell. Involved in modulating function of excretory duct cells. Plays a role in left/right patterning of cell fates in the hindgut. This Caenorhabditis elegans protein is Transcription factor ovo-like homolog lin-48.